We begin with the raw amino-acid sequence, 348 residues long: Anthranilate phosphoribosyltransferase (348 aa).

5-phospho-alpha-D-ribose 1-diphosphate contacts are provided by residues glycine 81, 84–85 (GD), 91–94 (NVST), 109–117 (KHGNRAVSG), and serine 121. Residue glycine 81 coordinates anthranilate. Serine 93 lines the Mg(2+) pocket. An anthranilate-binding site is contributed by asparagine 112. Arginine 167 contributes to the anthranilate binding site. Mg(2+) is bound by residues aspartate 226 and glutamate 227.

Belongs to the anthranilate phosphoribosyltransferase family. As to quaternary structure, homodimer. Mg(2+) serves as cofactor.

The enzyme catalyses N-(5-phospho-beta-D-ribosyl)anthranilate + diphosphate = 5-phospho-alpha-D-ribose 1-diphosphate + anthranilate. Its pathway is amino-acid biosynthesis; L-tryptophan biosynthesis; L-tryptophan from chorismate: step 2/5. Functionally, catalyzes the transfer of the phosphoribosyl group of 5-phosphorylribose-1-pyrophosphate (PRPP) to anthranilate to yield N-(5'-phosphoribosyl)-anthranilate (PRA). In Ectopseudomonas mendocina (strain ymp) (Pseudomonas mendocina), this protein is Anthranilate phosphoribosyltransferase.